Here is a 368-residue protein sequence, read N- to C-terminus: Glutamate 5-kinase (368 aa).

Lys-13 is an ATP binding site. Ser-54, Asp-141, and Asn-153 together coordinate substrate. Ser-173–Asp-174 provides a ligand contact to ATP. Positions Arg-278–Pro-355 constitute a PUA domain.

The protein belongs to the glutamate 5-kinase family.

Its subcellular location is the cytoplasm. It carries out the reaction L-glutamate + ATP = L-glutamyl 5-phosphate + ADP. The protein operates within amino-acid biosynthesis; L-proline biosynthesis; L-glutamate 5-semialdehyde from L-glutamate: step 1/2. Catalyzes the transfer of a phosphate group to glutamate to form L-glutamate 5-phosphate. The chain is Glutamate 5-kinase from Dinoroseobacter shibae (strain DSM 16493 / NCIMB 14021 / DFL 12).